A 499-amino-acid polypeptide reads, in one-letter code: Glycerol kinase (499 aa).

Residue Thr13 coordinates ADP. Positions 13, 14, and 15 each coordinate ATP. Thr13 is a sn-glycerol 3-phosphate binding site. Arg17 contacts ADP. Sn-glycerol 3-phosphate-binding residues include Arg83, Glu84, Tyr135, and Asp245. Positions 83, 84, 135, 245, and 246 each coordinate glycerol. ADP contacts are provided by Thr267 and Gly310. ATP-binding residues include Thr267, Gly310, Gln314, and Gly411. Residues Gly411 and Asn415 each coordinate ADP.

Belongs to the FGGY kinase family. In terms of assembly, homotetramer and homodimer (in equilibrium).

The catalysed reaction is glycerol + ATP = sn-glycerol 3-phosphate + ADP + H(+). It functions in the pathway polyol metabolism; glycerol degradation via glycerol kinase pathway; sn-glycerol 3-phosphate from glycerol: step 1/1. With respect to regulation, activated by phosphorylation and inhibited by fructose 1,6-bisphosphate (FBP). Key enzyme in the regulation of glycerol uptake and metabolism. Catalyzes the phosphorylation of glycerol to yield sn-glycerol 3-phosphate. This Halothermothrix orenii (strain H 168 / OCM 544 / DSM 9562) protein is Glycerol kinase.